We begin with the raw amino-acid sequence, 339 residues long: Transcription initiation factor IIB (339 aa).

Residues 39–70 form a TFIIB-type zinc finger; sequence EELICPVCGSKSIIKDYERAEIVCEMCGCVLQ. Zn(2+) is bound by residues C43, C46, C62, and C65. 2 tandem repeats follow at residues 156–239 and 250–331.

The protein belongs to the TFIIB family.

Functionally, stabilizes TBP binding to an archaeal box-A promoter. Also responsible for recruiting RNA polymerase II to the pre-initiation complex (DNA-TBP-TFIIB). The sequence is that of Transcription initiation factor IIB from Methanococcus maripaludis (strain C5 / ATCC BAA-1333).